Reading from the N-terminus, the 306-residue chain is Large ribosomal subunit protein uL18 (306 aa).

Belongs to the universal ribosomal protein uL18 family. In terms of assembly, component of the large ribosomal subunit (LSU).

The protein localises to the cytoplasm. The protein resides in the nucleus. Component of the ribosome, a large ribonucleoprotein complex responsible for the synthesis of proteins in the cell. The small ribosomal subunit (SSU) binds messenger RNAs (mRNAs) and translates the encoded message by selecting cognate aminoacyl-transfer RNA (tRNA) molecules. The large subunit (LSU) contains the ribosomal catalytic site termed the peptidyl transferase center (PTC), which catalyzes the formation of peptide bonds, thereby polymerizing the amino acids delivered by tRNAs into a polypeptide chain. The nascent polypeptides leave the ribosome through a tunnel in the LSU and interact with protein factors that function in enzymatic processing, targeting, and the membrane insertion of nascent chains at the exit of the ribosomal tunnel. In Theileria annulata, this protein is Large ribosomal subunit protein uL18 (RPL5).